Reading from the N-terminus, the 228-residue chain is MTRKIIAVIPASGVGSRMQAGLPKQYLKLQNKTILEHTLEIFLAHPDIEKIVVAVAETDPFYPQVALLDSPKIQIVFGGETRAHSVFNALQVIEDDSWVLVHDAARPCLKRSDLDKLLQIDDKQGAILATPAIDTMKRADGNKIMRTEDRSTLWHALTPQFFPTRLLKQALISAFKKNLTVTDEASAMEFNGYQPRLIAGRSDNLKITRPEDLALAEFYLTQNTEKKI.

Belongs to the IspD/TarI cytidylyltransferase family. IspD subfamily.

The enzyme catalyses 2-C-methyl-D-erythritol 4-phosphate + CTP + H(+) = 4-CDP-2-C-methyl-D-erythritol + diphosphate. The protein operates within isoprenoid biosynthesis; isopentenyl diphosphate biosynthesis via DXP pathway; isopentenyl diphosphate from 1-deoxy-D-xylulose 5-phosphate: step 2/6. In terms of biological role, catalyzes the formation of 4-diphosphocytidyl-2-C-methyl-D-erythritol from CTP and 2-C-methyl-D-erythritol 4-phosphate (MEP). The sequence is that of 2-C-methyl-D-erythritol 4-phosphate cytidylyltransferase from Actinobacillus pleuropneumoniae serotype 3 (strain JL03).